A 367-amino-acid polypeptide reads, in one-letter code: Anhydro-N-acetylmuramic acid kinase (367 aa).

ATP is bound at residue 11–18 (GTSLDGVD).

It belongs to the anhydro-N-acetylmuramic acid kinase family.

The enzyme catalyses 1,6-anhydro-N-acetyl-beta-muramate + ATP + H2O = N-acetyl-D-muramate 6-phosphate + ADP + H(+). The protein operates within amino-sugar metabolism; 1,6-anhydro-N-acetylmuramate degradation. Its pathway is cell wall biogenesis; peptidoglycan recycling. In terms of biological role, catalyzes the specific phosphorylation of 1,6-anhydro-N-acetylmuramic acid (anhMurNAc) with the simultaneous cleavage of the 1,6-anhydro ring, generating MurNAc-6-P. Is required for the utilization of anhMurNAc either imported from the medium or derived from its own cell wall murein, and thus plays a role in cell wall recycling. This Rhodopseudomonas palustris (strain HaA2) protein is Anhydro-N-acetylmuramic acid kinase.